Consider the following 132-residue polypeptide: Small ribosomal subunit protein uS9 (132 aa).

The protein belongs to the universal ribosomal protein uS9 family.

The chain is Small ribosomal subunit protein uS9 (rpsI) from Mycoplasma pneumoniae (strain ATCC 29342 / M129 / Subtype 1) (Mycoplasmoides pneumoniae).